We begin with the raw amino-acid sequence, 862 residues long: Genome polyprotein (862 aa).

A lipid anchor (N-myristoyl glycine; by host) is attached at Gly-2.

Belongs to the picornaviruses polyprotein family. As to quaternary structure, interacts with capsid protein VP1 and capsid protein VP3 to form heterotrimeric protomers. Interacts with capsid protein VP0, and capsid protein VP3 to form heterotrimeric protomers. Five protomers subsequently associate to form pentamers which serve as building blocks for the capsid. Interacts with capsid protein VP2, capsid protein VP3 and capsid protein VP4 following cleavage of capsid protein VP0. In terms of assembly, interacts with capsid protein VP1 and capsid protein VP3 in the mature capsid. As to quaternary structure, interacts with capsid protein VP0 and capsid protein VP1 to form heterotrimeric protomers. Five protomers subsequently associate to form pentamers which serve as building blocks for the capsid. Interacts with capsid protein VP4 in the mature capsid. Interacts with protein 2C; this interaction may be important for virion morphogenesis. Interacts with capsid protein VP1 and capsid protein VP3. Post-translationally, specific enzymatic cleavages in vivo by the viral proteases yield processing intermediates and the mature proteins. In terms of processing, myristoylation is required for the formation of pentamers during virus assembly. Further assembly of 12 pentamers and a molecule of genomic RNA generates the provirion. During virion maturation, immature virions are rendered infectious following cleavage of VP0 into VP4 and VP2. This maturation seems to be an autocatalytic event triggered by the presence of RNA in the capsid and it is followed by a conformational change infectious virion. Post-translationally, myristoylation is required during RNA encapsidation and formation of the mature virus particle.

The protein resides in the virion. The protein localises to the host cytoplasm. Its function is as follows. Forms an icosahedral capsid of pseudo T=3 symmetry with capsid proteins VP2 and VP3. The capsid is 300 Angstroms in diameter, composed of 60 copies of each capsid protein and enclosing the viral positive strand RNA genome. Capsid protein VP1 mainly forms the vertices of the capsid. Capsid protein VP1 interacts with host cell receptor to provide virion attachment to target host cells. This attachment induces virion internalization. Tyrosine kinases are probably involved in the entry process. After binding to its receptor, the capsid undergoes conformational changes. Capsid protein VP1 N-terminus (that contains an amphipathic alpha-helix) and capsid protein VP4 are externalized. Together, they shape a pore in the host membrane through which viral genome is translocated to host cell cytoplasm. In terms of biological role, forms an icosahedral capsid of pseudo T=3 symmetry with capsid proteins VP2 and VP3. The capsid is 300 Angstroms in diameter, composed of 60 copies of each capsid protein and enclosing the viral positive strand RNA genome. Lies on the inner surface of the capsid shell. After binding to the host receptor, the capsid undergoes conformational changes. Capsid protein VP4 is released, Capsid protein VP1 N-terminus is externalized, and together, they shape a pore in the host membrane through which the viral genome is translocated into the host cell cytoplasm. Functionally, component of immature procapsids, which is cleaved into capsid proteins VP4 and VP2 after maturation. Allows the capsid to remain inactive before the maturation step. This Echovirus 16 (strain Harrington) protein is Genome polyprotein.